A 180-amino-acid polypeptide reads, in one-letter code: Non-specific lipid transfer protein GPI-anchored 3 (180 aa).

The N-terminal stretch at 1–22 (MEAVRFAVAVVLVFCYVTSSNA) is a signal peptide. Cystine bridges form between Cys41-Cys78, Cys48-Cys62, Cys63-Cys104, and Cys76-Cys113. 2 N-linked (GlcNAc...) asparagine glycosylation sites follow: Asn91 and Asn120. Low complexity-rich tracts occupy residues 116–125 (SAGTNSSSTP) and 133–156 (PASS…TAKP). The interval 116-156 (SAGTNSSSTPPATPKTPPASSTSTGTGSGSTGNAAPSTAKP) is disordered. Residue Ser158 is the site of GPI-anchor amidated serine attachment. Residues 159 to 180 (SAPAINFGGLSFASAVVATLFF) constitute a propeptide, removed in mature form.

It belongs to the plant LTP family. In terms of tissue distribution, restricted to stamen, pollen and sporophytic tissues. Also detected, at low levels, in stems and leaves.

Its subcellular location is the cell membrane. In terms of biological role, lipid transfer protein involved in seed and ovule maturation and development, probably by regulating the fatty acids homeostasis during suberin and sporopollenin biosynthesis or deposition. The protein is Non-specific lipid transfer protein GPI-anchored 3 of Arabidopsis thaliana (Mouse-ear cress).